The following is a 299-amino-acid chain: Prohibitin-2 (299 aa).

N-acetylalanine is present on Ala-2. Positions 19-49 (MGTALKLLLGAGAVAYGIRESVFTVEGGHRA) are necessary for transcriptional repression. Tyr-128 carries the post-translational modification Phosphotyrosine. An N6-acetyllysine modification is found at Lys-147. A necessary for transcriptional repression region spans residues 150-174 (ASQLITQRAQVSLLIRRELTERAKD). Residue Ser-151 is modified to Phosphoserine. Residues 190-238 (SREYTAAVEAKQVAQQEAQRAQFLVEKAKQEQRQKIVQAEGEAEAARML) adopt a coiled-coil conformation. N6-acetyllysine occurs at positions 200, 250, and 262.

Belongs to the prohibitin family. The mitochondrial prohibitin complex consists of two subunits (PHB1 and PHB2), assembled into a membrane-associated ring-shaped supercomplex of approximately 1 mDa. Interacts with ESR1, HDAC1 and HDAC5. Interacts with ZNF703. Interacts with STOML2. Interacts with ARFGEF3. Interacts with SPHK2. Interacts with COX4I1; the interaction associates PHB2 with COX. Interacts with MAP1LC3B (membrane-bound form LC3-II); the interaction is direct and upon mitochondrial depolarization and proteasome-dependent outer membrane rupture. Interacts with IGFBP6 (via C-terminal domain). Interacts with CLPB. Interacts with CD86 (via cytoplasmic domain); the interactions increases after priming with CD40. Interacts with AFG3L2. Interacts with DNAJC19. Interacts with AKT2; this interaction may be important for myogenic differentiation. In terms of processing, phosphorylated. Tyrosine phosphorylation is indirectly stimulated by IGFBP6.

It is found in the mitochondrion inner membrane. Its subcellular location is the cytoplasm. It localises to the nucleus. The protein localises to the cell membrane. Protein with pleiotropic attributes mediated in a cell-compartment- and tissue-specific manner, which include the plasma membrane-associated cell signaling functions, mitochondrial chaperone, and transcriptional co-regulator of transcription factors and sex steroid hormones in the nucleus. Functionally, in the mitochondria, together with PHB, forms large ring complexes (prohibitin complexes) in the inner mitochondrial membrane (IMM) and functions as a chaperone protein that stabilizes mitochondrial respiratory enzymes and maintains mitochondrial integrity in the IMM, which is required for mitochondrial morphogenesis, neuronal survival, and normal lifespan. The prohibitin complex, with DNAJC19, regulates cardiolipin remodeling and the protein turnover of OMA1 in a cardiolipin-binding manner. Also regulates cytochrome-c oxidase assembly (COX) and mitochondrial respiration. Binding to sphingoid 1-phosphate (SPP) modulates its regulator activity. Has a key role of mitophagy receptor involved in targeting mitochondria for autophagic degradation. Involved in mitochondrial-mediated antiviral innate immunity, activates RIG-I-mediated signal transduction and production of IFNB1 and pro-inflammatory cytokine IL6. In terms of biological role, in the nucleus, serves as transcriptional co-regulator. Acts as a mediator of transcriptional repression by nuclear hormone receptors via recruitment of histone deacetylases. Functions as an estrogen receptor (ER)-selective coregulator that potentiates the inhibitory activities of antiestrogens and represses the activity of estrogens. Competes with NCOA1 for modulation of ER transcriptional activity. Its function is as follows. In the plasma membrane, is involved in IGFBP6-induced cell migration. Cooperates with CD86 to mediate CD86-signaling in B lymphocytes that regulates the level of IgG1 produced through the activation of distal signaling intermediates. Upon CD40 engagement, required to activate NF-kappa-B signaling pathway via phospholipase C and protein kinase C activation. This Bos taurus (Bovine) protein is Prohibitin-2 (PHB2).